Consider the following 566-residue polypeptide: Oxygen-dependent choline dehydrogenase (566 aa).

Position 7 to 36 (7 to 36 (DYIICGAGSAGNVLATRLTEDPDVTVLLLE)) interacts with FAD. Residues 180 to 202 (NGYQQEGFGPMDRTVTPKGRRAS) form a disordered region. Histidine 474 acts as the Proton acceptor in catalysis.

This sequence belongs to the GMC oxidoreductase family. Requires FAD as cofactor.

The enzyme catalyses choline + A = betaine aldehyde + AH2. The catalysed reaction is betaine aldehyde + NAD(+) + H2O = glycine betaine + NADH + 2 H(+). The protein operates within amine and polyamine biosynthesis; betaine biosynthesis via choline pathway; betaine aldehyde from choline (cytochrome c reductase route): step 1/1. In terms of biological role, involved in the biosynthesis of the osmoprotectant glycine betaine. Catalyzes the oxidation of choline to betaine aldehyde and betaine aldehyde to glycine betaine at the same rate. The protein is Oxygen-dependent choline dehydrogenase of Burkholderia orbicola (strain MC0-3).